A 164-amino-acid polypeptide reads, in one-letter code: Peptide deformylase (164 aa).

2 residues coordinate Fe cation: Cys-87 and His-129. Glu-130 is a catalytic residue. His-133 serves as a coordination point for Fe cation.

The protein belongs to the polypeptide deformylase family. It depends on Fe(2+) as a cofactor.

The enzyme catalyses N-terminal N-formyl-L-methionyl-[peptide] + H2O = N-terminal L-methionyl-[peptide] + formate. In terms of biological role, removes the formyl group from the N-terminal Met of newly synthesized proteins. Requires at least a dipeptide for an efficient rate of reaction. N-terminal L-methionine is a prerequisite for activity but the enzyme has broad specificity at other positions. This is Peptide deformylase from Thermotoga maritima (strain ATCC 43589 / DSM 3109 / JCM 10099 / NBRC 100826 / MSB8).